The sequence spans 1040 residues: MGAPARKRASLLLLLLATMALVSSPGWSFSQGTPATFGPVFEEQPVGLLFPEESAEDQVTLACRARASPPATYRWKMNGTEMNLEPGSRHQLMGGNLVIMSPTKAQDAGVYQCLASNPVGTVVSKEAVLRFGFLQEFSKEERDPVKTHEGWGVMLPCNPPAHYPGLSYRWLLNEFPNFIPTDGRHFVSQTTGNLYIARTNASDLGNYSCLATSHLDFSTKSVFSKFAQLNLAAEDPRLFAPSIKARFPPETYALVGQQVTLECFAFGNPVPRIKWRKVDGSLSPQWGTAEPTLQIPSVSFEDEGTYECEAENSKGRDTVQGRIIVQAQPEWLKVISDTEADIGSNLRWGCAAAGKPRPMVRWLRNGEPLASQNRVEVLAGDLRFSKLNLEDSGMYQCVAENKHGTIYASAELAVQALAPDFRQNPVRRLIPAARGGEISIPCQPRAAPKATILWSKGTEILGNSTRVTVTLDGTLIIRNISRSDEGKYTCFAENFMGKANSTGILSVRDATKITLAPSSADINVGDNLTLQCHASHDPTMDLTFTWTLDDFPVDFDKPGGHYRRASVKETIGDLTILNAQLRHGGTYTCMAQTVVDGASKEATVLVRGPPGPPGGVVVRDIGDTTVQLSWSRGFDNHSPIAKYTLQARTPPSGKWKQVRTNPVNIEGNAETAQVLGLMPWMDYEFRVSASNILGTGEPSGPSSRIRTKEAVPSVAPSGLSGGGGAPGELTINWTPMSREYQNGDGFGYLLSFRRQGSSSWQTARVPGADTQYFVYSNDSIHPYTPFEVKIRSYNRRGDGPESLTAIVYSAEEEPKVAPAKVWAKGSSSSEMNVSWEPVLQDMNGILLGYEIRYWKAGDKEAAADRVRTAGLDSSARVTGLYPNTKYHVTVRAYNRAGTGPASPSADAMTMKPPPRRPPGNISWTFSSSSLSLKWDPVVPLRNESTVTGYKMLYQNDLQPTPMLHLTSKNWIEIPVPEDIGHALVQIRTTGPGGDGIPAEVHIVRNGGTSMMVESSAVRPAHPGPVFSCMVILMLAGCQRL.

Positions 1 to 30 (MGAPARKRASLLLLLLATMALVSSPGWSFS) are cleaved as a signal peptide. 6 Ig-like C2-type domains span residues 39–130 (PVFE…AVLR), 135–224 (QEFS…SVFS), 241–324 (PSIK…GRII), 329–413 (PEWL…AELA), 419–506 (PDFR…GILS), and 511–605 (TKIT…ATVL). Intrachain disulfides connect cysteine 63–cysteine 113, cysteine 157–cysteine 209, cysteine 263–cysteine 308, and cysteine 350–cysteine 397. Asparagine 78, asparagine 200, and asparagine 206 each carry an N-linked (GlcNAc...) asparagine glycan. Residues asparagine 463, asparagine 479, asparagine 500, and asparagine 527 are each glycosylated (N-linked (GlcNAc...) asparagine). 4 consecutive Fibronectin type-III domains span residues 612 to 710 (PPGG…TKEA), 715 to 812 (APSG…SAEE), 817 to 913 (APAK…MKPP), and 917 to 1008 (PPGN…NGGT). N-linked (GlcNAc...) asparagine glycosylation occurs at asparagine 777. The Cell attachment site signature appears at 796–798 (RGD). N-linked (GlcNAc...) asparagine glycans are attached at residues asparagine 832, asparagine 920, and asparagine 942. Residues 897–922 (GTGPASPSADAMTMKPPPRRPPGNIS) are disordered. Serine 1014 is lipidated: GPI-anchor amidated serine. A propeptide spans 1015–1040 (SAVRPAHPGPVFSCMVILMLAGCQRL) (removed in mature form).

Belongs to the immunoglobulin superfamily. Contactin family.

The protein resides in the cell membrane. In terms of biological role, in conjunction with another transmembrane protein, CNTNAP2, contributes to the organization of axonal domains at nodes of Ranvier by maintaining voltage-gated potassium channels at the juxtaparanodal region. The polypeptide is Contactin-2 (Cntn2) (Mus musculus (Mouse)).